The chain runs to 743 residues: Merozoite surface protein 9 (743 aa).

The N-terminal stretch at 1-23 (MMNMKIVLFSLLLFVIRWNIISC) is a signal peptide. An interaction with MSP1 and host SLC4A1/Band 3 region spans residues 77–235 (KELLKEKQYT…VNDEDDVNDE (159 aa)). 4 disordered regions span residues 202–282 (KSQG…ATAY), 459–487 (DNQAVDTKSMEEPKVKAQPALRGVEPTED), 512–540 (NNTPNVVPPTQSKKKNKNETVSGMDENFD), and 666–743 (VDAL…EESK). Positions 211-224 (SQNQNENNDNQKYQ) are enriched in polar residues. Repeat copies occupy residues 226-231 (VNDEDD), 232-237 (VNDEED), 238-243 (TNDDED), 244-249 (TNDEED), 250-255 (TNDDED), 256-261 (TNDDED), 262-267 (TNDEED), and 268-273 (TNDEED). The segment at 226-273 (VNDEDDVNDEEDTNDDEDTNDEEDTNDDEDTNDDEDTNDEEDTNDEED) is 8 X 6 AA tandem repeats of [VT]-N-D-[ED]-[ED]-D. A compositionally biased stretch (acidic residues) spans 226–274 (VNDEDDVNDEEDTNDDEDTNDEEDTNDDEDTNDDEDTNDEEDTNDEEDH). Residues 364–528 (LKDNLINYEF…PPTQSKKKNK (165 aa)) are interaction with MSP1 and host SLC4A1/Band 3. Over residues 459–473 (DNQAVDTKSMEEPKV) the composition is skewed to basic and acidic residues. Residues 512-521 (NNTPNVVPPT) show a composition bias toward low complexity. A coiled-coil region spans residues 644 to 733 (NQETEEEMEK…QEEEEEEEIV (90 aa)). The span at 672-721 (KNKEEEEKEKEKEEKEKEEKEKEKEEKEKEEKEKEEKEKEEKEEEKKEKE) shows a compositional bias: basic and acidic residues. The span at 722 to 733 (EEQEEEEEEEIV) shows a compositional bias: acidic residues.

The protein belongs to the plasmodium ABRA family. Forms a complex composed of MSP1, MSP6, MSP7, MSP9 and MSP3; within the complex, MSP6 and MSP9 mediate the binding to the host erythrocyte. Interacts with MSP1 subunits p19 and p42; the interaction is direct. Interacts with host SLC4A1/Band 3 protein (via the 5ABC region). MSP1 subunits p19 or p42, and MSP9 form a co-ligand complex that interacts with host SLC4A1/Band 3 protein. In terms of processing, not glycosylated.

It is found in the cell membrane. The protein localises to the parasitophorous vacuole lumen. It localises to the secreted. Functionally, during the asexual blood stage, involved in the sialic acid-independent (SAID) merozoite invasion of host erythrocytes by binding to host SLC4A1/Band 3 protein on the surface of the host erythrocyte. The polypeptide is Merozoite surface protein 9 (Plasmodium falciparum (isolate 3D7)).